We begin with the raw amino-acid sequence, 316 residues long: Protease HtpX homolog (316 aa).

Residues 16 to 36 traverse the membrane as a helical segment; it reads LFMGAGFLIGGATGMMIALVF. Histidine 134 is a binding site for Zn(2+). Residue glutamate 135 is part of the active site. Histidine 138 contributes to the Zn(2+) binding site. Transmembrane regions (helical) follow at residues 149-169 and 180-200; these read VTAT…FFGG and LGGM…AMLV. Glutamate 209 provides a ligand contact to Zn(2+). The disordered stretch occupies residues 295-316; that stretch reads PVMAATTSSSVPLSGERGGPWS.

It belongs to the peptidase M48B family. Zn(2+) is required as a cofactor.

The protein resides in the cell inner membrane. The chain is Protease HtpX homolog from Caulobacter vibrioides (strain ATCC 19089 / CIP 103742 / CB 15) (Caulobacter crescentus).